Here is a 473-residue protein sequence, read N- to C-terminus: Serine palmitoyltransferase 1 (473 aa).

Residues 1–66 form an interaction with SPTLC2 region; it reads MATATEQWVL…KEELIEEWQP (66 aa). Residues 16-36 form a helical membrane-spanning segment; it reads ALYEAPAYHLILEGILILWII. Tyr-164 carries the phosphotyrosine; by ABL modification.

Belongs to the class-II pyridoxal-phosphate-dependent aminotransferase family. In terms of assembly, component of the serine palmitoyltransferase (SPT) complex, which is also composed of SPTLC2 or SPTLC3 and SPTSSA or SPTSSB. The heterodimer with SPTLC2 or SPTLC3 forms the catalytic core of the enzyme, while SPTSSA or SPTSSB subunits determine substrate specificity. SPT also interacts with ORMDL proteins, especially ORMDL3, which negatively regulate SPT activity in the presence of ceramides. Forms dimers of heterodimers with SPTLC2. Interacts with RTN4. Pyridoxal 5'-phosphate is required as a cofactor. In terms of processing, phosphorylation at Tyr-164 inhibits activity and promotes cell survival.

The protein localises to the endoplasmic reticulum membrane. It catalyses the reaction L-serine + hexadecanoyl-CoA + H(+) = 3-oxosphinganine + CO2 + CoA. The catalysed reaction is octadecanoyl-CoA + L-serine + H(+) = 3-oxoeicosasphinganine + CO2 + CoA. The enzyme catalyses tetradecanoyl-CoA + L-serine + H(+) = 3-oxohexadecasphinganine + CO2 + CoA. It carries out the reaction dodecanoyl-CoA + L-serine + H(+) = 3-oxotetradecasphinganine + CO2 + CoA. It participates in lipid metabolism; sphingolipid metabolism. With respect to regulation, SPT complex catalytic activity is negatively regulated by ORMDL proteins, including ORMDL3, in the presence of ceramides. This mechanism allows to maintain ceramide levels at sufficient concentrations for the production of complex sphingolipids, but which prevents the accumulation of ceramides to levels that trigger apoptosis. Component of the serine palmitoyltransferase multisubunit enzyme (SPT) that catalyzes the initial and rate-limiting step in sphingolipid biosynthesis by condensing L-serine and activated acyl-CoA (most commonly palmitoyl-CoA) to form long-chain bases. The SPT complex is also composed of SPTLC2 or SPTLC3 and SPTSSA or SPTSSB. Within this complex, the heterodimer with SPTLC2 or SPTLC3 forms the catalytic core. The composition of the serine palmitoyltransferase (SPT) complex determines the substrate preference. The SPTLC1-SPTLC2-SPTSSA complex shows a strong preference for C16-CoA substrate, while the SPTLC1-SPTLC3-SPTSSA isozyme uses both C14-CoA and C16-CoA as substrates, with a slight preference for C14-CoA. The SPTLC1-SPTLC2-SPTSSB complex shows a strong preference for C18-CoA substrate, while the SPTLC1-SPTLC3-SPTSSB isozyme displays an ability to use a broader range of acyl-CoAs, without apparent preference. Required for adipocyte cell viability and metabolic homeostasis. This is Serine palmitoyltransferase 1 (SPTLC1) from Pongo abelii (Sumatran orangutan).